The sequence spans 60 residues: Large ribosomal subunit protein bL32 (60 aa).

Disordered stretches follow at residues 1 to 28 (MAVQQNKKSPSKRGMHRSHNALALPGIA) and 41 to 60 (HISPNGFYRGRQVLKPKSEA). Over residues 9–19 (SPSKRGMHRSH) the composition is skewed to basic residues.

This sequence belongs to the bacterial ribosomal protein bL32 family.

This Verminephrobacter eiseniae (strain EF01-2) protein is Large ribosomal subunit protein bL32.